A 508-amino-acid polypeptide reads, in one-letter code: Steroid 17-alpha-hydroxylase/17,20 lyase (508 aa).

Asn-202 serves as a coordination point for substrate. Cys-442 serves as a coordination point for heme.

The protein belongs to the cytochrome P450 family. It depends on heme as a cofactor.

The protein resides in the endoplasmic reticulum membrane. It is found in the microsome membrane. It catalyses the reaction a C21-steroid + reduced [NADPH--hemoprotein reductase] + O2 = a 17alpha-hydroxy-C21-steroid + oxidized [NADPH--hemoprotein reductase] + H2O + H(+). The enzyme catalyses progesterone + reduced [NADPH--hemoprotein reductase] + O2 = 17alpha-hydroxyprogesterone + oxidized [NADPH--hemoprotein reductase] + H2O + H(+). It carries out the reaction pregnenolone + reduced [NADPH--hemoprotein reductase] + O2 = 17alpha-hydroxypregnenolone + oxidized [NADPH--hemoprotein reductase] + H2O + H(+). The catalysed reaction is 17alpha-hydroxyprogesterone + reduced [NADPH--hemoprotein reductase] + O2 = androst-4-ene-3,17-dione + acetate + oxidized [NADPH--hemoprotein reductase] + H2O + 2 H(+). It catalyses the reaction 17alpha-hydroxyprogesterone + reduced [NADPH--hemoprotein reductase] + O2 = 16alpha,17alpha-dihydroxyprogesterone + oxidized [NADPH--hemoprotein reductase] + H2O + H(+). The enzyme catalyses 16alpha,17alpha-dihydroxyprogesterone + reduced [NADPH--hemoprotein reductase] + O2 = 6beta,16alpha,17alpha-trihydroxyprogesterone + oxidized [NADPH--hemoprotein reductase] + H2O + H(+). It carries out the reaction 17alpha-hydroxypregnenolone + reduced [NADPH--hemoprotein reductase] + O2 = 3beta-hydroxyandrost-5-en-17-one + acetate + oxidized [NADPH--hemoprotein reductase] + H2O + 2 H(+). The catalysed reaction is 16alpha,17alpha-dihydroxypregnenolone + reduced [NADPH--hemoprotein reductase] + O2 = 3beta,16alpha-dihydroxy-androst-5-en-17-one + acetate + oxidized [NADPH--hemoprotein reductase] + H2O + 2 H(+). It catalyses the reaction 3beta-hydroxyandrost-5-en-17-one + reduced [NADPH--hemoprotein reductase] + O2 = 3beta,16alpha-dihydroxy-androst-5-en-17-one + oxidized [NADPH--hemoprotein reductase] + H2O + H(+). The enzyme catalyses androst-4-ene-3,17-dione + reduced [NADPH--hemoprotein reductase] + O2 = 16alpha-hydroxyandrost-4-ene-3,17-dione + oxidized [NADPH--hemoprotein reductase] + H2O + H(+). Its pathway is steroid hormone biosynthesis. The protein operates within steroid biosynthesis; glucocorticoid biosynthesis. With respect to regulation, regulated predominantly by intracellular cAMP levels. The 17,20-lyase activity is stimulated by cytochrome b5, which acts as an allosteric effector increasing the Vmax of the lyase activity. Its function is as follows. A cytochrome P450 monooxygenase involved in corticoid and androgen biosynthesis. Catalyzes 17-alpha hydroxylation of C21 steroids, which is common for both pathways. A second oxidative step, required only for androgen synthesis, involves an acyl-carbon cleavage. The 17-alpha hydroxy intermediates, as part of adrenal glucocorticoids biosynthesis pathway, are precursors of cortisol. Hydroxylates steroid hormones, pregnenolone and progesterone to form 17-alpha hydroxy metabolites, followed by the cleavage of the C17-C20 bond to form C19 steroids, dehydroepiandrosterone (DHEA) and androstenedione. Has 16-alpha hydroxylase activity. Catalyzes 16-alpha hydroxylation of 17-alpha hydroxy pregnenolone, followed by the cleavage of the C17-C20 bond to form 16-alpha-hydroxy DHEA. Also 16-alpha hydroxylates androgens, relevant for estriol synthesis. Mechanistically, uses molecular oxygen inserting one oxygen atom into a substrate, and reducing the second into a water molecule, with two electrons provided by NADPH via cytochrome P450 reductase (CPR; NADPH-ferrihemoprotein reductase). The polypeptide is Steroid 17-alpha-hydroxylase/17,20 lyase (CYP17A1) (Felis catus (Cat)).